The primary structure comprises 261 residues: Transcription factor BEE 3 (261 aa).

Over residues 72–82 (NIQNNEESSSQ) the composition is skewed to low complexity. 2 disordered regions span residues 72–158 (NIQN…TDSH) and 242–261 (VEMGQGRDGSSVFHSSSWTL). A compositionally biased stretch (polar residues) spans 95-123 (VSTSENSVSDQTLSTSSAQVSINGNISTK). Basic and acidic residues predominate over residues 135-146 (NREEEKEREVVH). In terms of domain architecture, bHLH spans 153 to 203 (QATDSHSIAERVRRGKINERLKCLQDIVPGCYKTMGMATMLDEIINYVQSL).

Homodimer. In terms of tissue distribution, expressed in stems.

It localises to the nucleus. Functionally, positive regulator of brassinosteroid signaling. The chain is Transcription factor BEE 3 (BEE3) from Arabidopsis thaliana (Mouse-ear cress).